We begin with the raw amino-acid sequence, 203 residues long: Dephospho-CoA kinase (203 aa).

One can recognise a DPCK domain in the interval 6–203 (RLGITGGIAC…SLLGRGGKGG (198 aa)). Position 14 to 19 (14 to 19 (ACGKSV)) interacts with ATP.

The protein belongs to the CoaE family.

It is found in the cytoplasm. The enzyme catalyses 3'-dephospho-CoA + ATP = ADP + CoA + H(+). It participates in cofactor biosynthesis; coenzyme A biosynthesis; CoA from (R)-pantothenate: step 5/5. Catalyzes the phosphorylation of the 3'-hydroxyl group of dephosphocoenzyme A to form coenzyme A. The protein is Dephospho-CoA kinase of Thermosynechococcus vestitus (strain NIES-2133 / IAM M-273 / BP-1).